A 247-amino-acid chain; its full sequence is MVRRVKTGIPGMDEILHGGIPERNVVLLSGGPGTGKSIFSQQFLWNGLQMGEPGIYVALEEHPVQVRQNMAQFGWDVRKYEEEGLFAMVDAFTAGVGKSKEYEKYIVHDLTDIREFIEVLRQAIRDINAKRVVVDSVTTLYINKPAMARSIILQLKRVLAGTGCTSIFVSQISVGERGFGGPGVEHGVDGIIRLDLDEIDGELKRSLIVWKMRGTSHSMKRHPFDITDKGIIVYPDKVLKRGRIYEL.

The KaiC domain maps to 3-247 (RRVKTGIPGM…VLKRGRIYEL (245 aa)). 30–37 (GGPGTGKS) lines the ATP pocket.

The protein belongs to the UPF0273 family.

This Pyrococcus furiosus (strain ATCC 43587 / DSM 3638 / JCM 8422 / Vc1) protein is UPF0273 protein PF1931.